The primary structure comprises 342 residues: Nucleoid-associated protein Shewmr7_2293 (342 aa).

The protein belongs to the YejK family.

The protein resides in the cytoplasm. It is found in the nucleoid. The polypeptide is Nucleoid-associated protein Shewmr7_2293 (Shewanella sp. (strain MR-7)).